We begin with the raw amino-acid sequence, 1379 residues long: DNA-directed RNA polymerase subunit beta'' (1379 aa).

Residues cysteine 220, cysteine 293, cysteine 300, and cysteine 303 each contribute to the Zn(2+) site.

Belongs to the RNA polymerase beta' chain family. RpoC2 subfamily. As to quaternary structure, in plastids the minimal PEP RNA polymerase catalytic core is composed of four subunits: alpha, beta, beta', and beta''. When a (nuclear-encoded) sigma factor is associated with the core the holoenzyme is formed, which can initiate transcription. It depends on Zn(2+) as a cofactor.

It is found in the plastid. The protein localises to the chloroplast. It catalyses the reaction RNA(n) + a ribonucleoside 5'-triphosphate = RNA(n+1) + diphosphate. Functionally, DNA-dependent RNA polymerase catalyzes the transcription of DNA into RNA using the four ribonucleoside triphosphates as substrates. This Nasturtium officinale (Watercress) protein is DNA-directed RNA polymerase subunit beta''.